The chain runs to 305 residues: D-alanine--D-alanine ligase (305 aa).

The ATP-grasp domain occupies 105–300 (KMIWQAAGIN…FDELVVQILE (196 aa)). 131–186 (ADRLGLPLIIKPAREGSTLGLNKVDNEQDFRSAYQAAAEYDSLVLAEQFIQGIELT) contributes to the ATP binding site. 3 residues coordinate Mg(2+): Asp-254, Glu-267, and Asn-269.

This sequence belongs to the D-alanine--D-alanine ligase family. Mg(2+) serves as cofactor. It depends on Mn(2+) as a cofactor.

Its subcellular location is the cytoplasm. The catalysed reaction is 2 D-alanine + ATP = D-alanyl-D-alanine + ADP + phosphate + H(+). The protein operates within cell wall biogenesis; peptidoglycan biosynthesis. Its function is as follows. Cell wall formation. The protein is D-alanine--D-alanine ligase of Nitrosomonas europaea (strain ATCC 19718 / CIP 103999 / KCTC 2705 / NBRC 14298).